The sequence spans 393 residues: Methylthioribose kinase (393 aa).

ATP contacts are provided by residues N38, K53, and 107 to 109 (EDL). D225 contacts substrate. 242–244 (DPE) contacts ATP. R332 is a substrate binding site.

The protein belongs to the methylthioribose kinase family. In terms of assembly, homodimer.

The catalysed reaction is 5-(methylsulfanyl)-D-ribose + ATP = 5-(methylsulfanyl)-alpha-D-ribose 1-phosphate + ADP + H(+). Its pathway is amino-acid biosynthesis; L-methionine biosynthesis via salvage pathway; S-methyl-5-thio-alpha-D-ribose 1-phosphate from S-methyl-5'-thioadenosine (hydrolase route): step 2/2. Functionally, catalyzes the phosphorylation of methylthioribose into methylthioribose-1-phosphate. This chain is Methylthioribose kinase, found in Bacillus cereus (strain AH820).